We begin with the raw amino-acid sequence, 110 residues long: Nucleoid-associated protein Sfum_2790 (110 aa).

It belongs to the YbaB/EbfC family. As to quaternary structure, homodimer.

The protein localises to the cytoplasm. The protein resides in the nucleoid. Functionally, binds to DNA and alters its conformation. May be involved in regulation of gene expression, nucleoid organization and DNA protection. The sequence is that of Nucleoid-associated protein Sfum_2790 from Syntrophobacter fumaroxidans (strain DSM 10017 / MPOB).